The chain runs to 451 residues: Kynureninase (451 aa).

Pyridoxal 5'-phosphate-binding positions include Leu131, Ser132, 159-162, Ser215, Asp244, His247, and Tyr269; that span reads FPSD. At Lys270 the chain carries N6-(pyridoxal phosphate)lysine. Residues Trp303 and Asn331 each contribute to the pyridoxal 5'-phosphate site.

It belongs to the kynureninase family. In terms of assembly, homodimer. The cofactor is pyridoxal 5'-phosphate.

The protein resides in the cytoplasm. The catalysed reaction is L-kynurenine + H2O = anthranilate + L-alanine + H(+). It catalyses the reaction 3-hydroxy-L-kynurenine + H2O = 3-hydroxyanthranilate + L-alanine + H(+). It participates in amino-acid degradation; L-kynurenine degradation; L-alanine and anthranilate from L-kynurenine: step 1/1. Its pathway is cofactor biosynthesis; NAD(+) biosynthesis; quinolinate from L-kynurenine: step 2/3. In terms of biological role, catalyzes the cleavage of L-kynurenine (L-Kyn) and L-3-hydroxykynurenine (L-3OHKyn) into anthranilic acid (AA) and 3-hydroxyanthranilic acid (3-OHAA), respectively. This chain is Kynureninase, found in Dictyostelium discoideum (Social amoeba).